The primary structure comprises 418 residues: Nucleoside permease NupG (418 aa).

Over 1–4 the chain is Cytoplasmic; the sequence is MNLK. A helical transmembrane segment spans residues 5–29; sequence LQLKILSFLQFCLWGSWLTTLGSYM. Topologically, residues 30 to 36 are periplasmic; the sequence is FVTLKFD. The helical transmembrane segment at 37-58 threads the bilayer; it reads GASIGAVYSSLGIAAVFMPALL. Residues 59–67 lie on the Cytoplasmic side of the membrane; sequence GIVADKWLS. The chain crosses the membrane as a helical span at residues 68 to 88; that stretch reads AKWVYAICHTIGAITLFMAAQ. The Periplasmic portion of the chain corresponds to 89 to 91; that stretch reads VTT. The helical transmembrane segment at 92 to 113 threads the bilayer; it reads PEAMFLVILINSFAYMPTLGLI. Residues 114–135 are Cytoplasmic-facing; it reads NTISYYRLQNAGMDIVTDFPPI. Residues 136 to 156 form a helical membrane-spanning segment; that stretch reads RIWGTIGFIMAMWVVSLSGFE. At 157–158 the chain is on the periplasmic side; the sequence is LS. A helical membrane pass occupies residues 159 to 178; it reads HMQLYIGAALSAILVLFTLT. Over 179–209 the chain is Cytoplasmic; the sequence is LPHIPVAKQQANQSWTTLLGLDAFALFKNKR. The chain crosses the membrane as a helical span at residues 210 to 236; that stretch reads MAIFFIFSMLLGAELQITNMFGNTFLH. The Periplasmic segment spans residues 237-247; the sequence is SFDKDPMFASS. Residues 248–268 traverse the membrane as a helical segment; that stretch reads FIVQHASIIMSISQISETLFI. The Cytoplasmic segment spans residues 269 to 280; that stretch reads LTIPFFLSRYGI. Residues 281–300 traverse the membrane as a helical segment; sequence KNVMMISIVAWILRFALFAY. At 301–305 the chain is on the periplasmic side; sequence GDPTP. Residues 306–326 form a helical membrane-spanning segment; that stretch reads FGTVLLVLSMIVYGCAFDFFN. Residues 327-346 lie on the Cytoplasmic side of the membrane; sequence ISGSVFVEKEVSPAIRASAQ. Residues 347–369 form a helical membrane-spanning segment; the sequence is GMFLMMTNGFGCILGGIVSGKVV. The Periplasmic segment spans residues 370–379; that stretch reads EMYTQNGITD. A helical membrane pass occupies residues 380–403; sequence WQTVWLIFAGYSVVLAFAFMAMFK. The Cytoplasmic portion of the chain corresponds to 404-418; sequence YKHVRVPTGTQTVSH.

Belongs to the major facilitator superfamily. Nucleoside:H(+) symporter (NHS) (TC 2.A.1.10) family.

Its subcellular location is the cell inner membrane. The catalysed reaction is adenosine(in) + H(+)(in) = adenosine(out) + H(+)(out). It carries out the reaction uridine(in) + H(+)(in) = uridine(out) + H(+)(out). The enzyme catalyses thymidine(in) + H(+)(in) = thymidine(out) + H(+)(out). It catalyses the reaction cytidine(in) + H(+)(in) = cytidine(out) + H(+)(out). The catalysed reaction is 2'-deoxycytidine(in) + H(+)(in) = 2'-deoxycytidine(out) + H(+)(out). It carries out the reaction guanosine(in) + H(+)(in) = guanosine(out) + H(+)(out). The enzyme catalyses inosine(in) + H(+)(in) = inosine(out) + H(+)(out). Its activity is regulated as follows. Inhibited by the protonophore uncouplers 2,4-dinitrophenol and carbonyl cyanide m-chlorophenylhydrazone (CCCP), and by valinomycin. Inhibited by the nucleoside antibiotic showdomycin. Broad-specificity transporter of purine and pyrimidine nucleosides. Can transport adenosine, uridine, thymidine, cytidine, deoxycytidine, guanosine and inosine. Can also transport xanthosine, but with a very low affinity. Transport is driven by a proton motive force. This is Nucleoside permease NupG from Escherichia coli (strain K12).